The following is a 486-amino-acid chain: MSKDIRVRYAPSPTGVVHIGNARTALFNYLYARHHGGTFLIRIEDTDRKRHVEDGERSQLENLRWLGMDWDESPESHENYRQSERLDLYQKYIDQLLAEGKAYKSYVTEEELAAERERQEAAGETPRYINEYLGMSEEEKAAYIAEREAAGIIPTVRLAVNESGIYKWHDMVKGDIEFEGGNIGGDWVIQKKDGYPTYNFAVVIDDHDMQISHVIRGDDHIANTPKQLMVYEALGWEAPEFGHMTLIINSETGKKLSKRDTNTLQFIEDYRKKGYLPEAVFNFIALLGWNPGGEDEIFSREELIKLFDENRLSKSPAAFDQKKLDWMSNDYIKNADLETIFEMAKPFLEEAGRLTDKAEKLVELYKPQMKSVDEIIPLTDLFFSDFPELTEAEREVMTGETVPTVLEAFKAKLEAMTDDEFVTENIFPQIKAVQKETGIKGKNLFMPIRIAVSGEMHGPELPDTIFLLGREKSIQHIENILKEISK.

Positions 11–21 match the 'HIGH' region motif; sequence PSPTGVVHIGN. The short motif at 255-259 is the 'KMSKS' region element; the sequence is KLSKR. Lys258 lines the ATP pocket.

The protein belongs to the class-I aminoacyl-tRNA synthetase family. Glutamate--tRNA ligase type 1 subfamily. Monomer.

Its subcellular location is the cytoplasm. The enzyme catalyses tRNA(Glu) + L-glutamate + ATP = L-glutamyl-tRNA(Glu) + AMP + diphosphate. Functionally, catalyzes the attachment of glutamate to tRNA(Glu) in a two-step reaction: glutamate is first activated by ATP to form Glu-AMP and then transferred to the acceptor end of tRNA(Glu). The sequence is that of Glutamate--tRNA ligase from Streptococcus pneumoniae (strain CGSP14).